A 689-amino-acid polypeptide reads, in one-letter code: Glycine--tRNA ligase beta subunit (689 aa).

This sequence belongs to the class-II aminoacyl-tRNA synthetase family. As to quaternary structure, tetramer of two alpha and two beta subunits.

Its subcellular location is the cytoplasm. The catalysed reaction is tRNA(Gly) + glycine + ATP = glycyl-tRNA(Gly) + AMP + diphosphate. This is Glycine--tRNA ligase beta subunit from Acinetobacter baumannii (strain ACICU).